Reading from the N-terminus, the 193-residue chain is Adenylate kinase (193 aa).

Residue 10–15 coordinates ATP; the sequence is GAGKGT. The interval 30 to 59 is NMP; the sequence is STGDMLRAAVKAGTPIGLKAKAVMDAGGLV. Residues Thr-31, Arg-36, 57 to 59, 85 to 88, and Gln-92 contribute to the AMP site; these read GLV and GFPR. Residues 126 to 142 form an LID region; that stretch reads KRAKETLAAGGTVRADD. Arg-127 is an ATP binding site. AMP-binding residues include Arg-139 and Arg-150. An ATP-binding site is contributed by Ala-178.

This sequence belongs to the adenylate kinase family. Monomer.

Its subcellular location is the cytoplasm. It catalyses the reaction AMP + ATP = 2 ADP. It participates in purine metabolism; AMP biosynthesis via salvage pathway; AMP from ADP: step 1/1. Catalyzes the reversible transfer of the terminal phosphate group between ATP and AMP. Plays an important role in cellular energy homeostasis and in adenine nucleotide metabolism. This chain is Adenylate kinase, found in Beijerinckia indica subsp. indica (strain ATCC 9039 / DSM 1715 / NCIMB 8712).